A 405-amino-acid polypeptide reads, in one-letter code: NADH-quinone oxidoreductase subunit D (405 aa).

Belongs to the complex I 49 kDa subunit family. In terms of assembly, NDH-1 is composed of 14 different subunits. Subunits NuoB, C, D, E, F, and G constitute the peripheral sector of the complex.

Its subcellular location is the cell inner membrane. It carries out the reaction a quinone + NADH + 5 H(+)(in) = a quinol + NAD(+) + 4 H(+)(out). Functionally, NDH-1 shuttles electrons from NADH, via FMN and iron-sulfur (Fe-S) centers, to quinones in the respiratory chain. The immediate electron acceptor for the enzyme in this species is believed to be ubiquinone. Couples the redox reaction to proton translocation (for every two electrons transferred, four hydrogen ions are translocated across the cytoplasmic membrane), and thus conserves the redox energy in a proton gradient. The sequence is that of NADH-quinone oxidoreductase subunit D from Ruegeria pomeroyi (strain ATCC 700808 / DSM 15171 / DSS-3) (Silicibacter pomeroyi).